We begin with the raw amino-acid sequence, 270 residues long: Indole-3-glycerol phosphate synthase (270 aa).

It belongs to the TrpC family.

The catalysed reaction is 1-(2-carboxyphenylamino)-1-deoxy-D-ribulose 5-phosphate + H(+) = (1S,2R)-1-C-(indol-3-yl)glycerol 3-phosphate + CO2 + H2O. It functions in the pathway amino-acid biosynthesis; L-tryptophan biosynthesis; L-tryptophan from chorismate: step 4/5. In Beutenbergia cavernae (strain ATCC BAA-8 / DSM 12333 / CCUG 43141 / JCM 11478 / NBRC 16432 / NCIMB 13614 / HKI 0122), this protein is Indole-3-glycerol phosphate synthase.